The chain runs to 132 residues: Small ribosomal subunit protein uS11c (132 aa).

It belongs to the universal ribosomal protein uS11 family. As to quaternary structure, part of the 30S ribosomal subunit.

The protein localises to the plastid. The protein resides in the chloroplast. This Cryptomeria japonica (Japanese cedar) protein is Small ribosomal subunit protein uS11c.